A 451-amino-acid polypeptide reads, in one-letter code: Cobyrinate a,c-diamide synthase (451 aa).

Residues 246–437 enclose the GATase cobBQ-type domain; sequence KIGVAYDEVF…VHTHVAAMPN (192 aa). Cysteine 328 (nucleophile) is an active-site residue.

Belongs to the CobB/CbiA family. It depends on Mg(2+) as a cofactor.

The enzyme catalyses cob(II)yrinate + 2 L-glutamine + 2 ATP + 2 H2O = cob(II)yrinate a,c diamide + 2 L-glutamate + 2 ADP + 2 phosphate + 2 H(+). It catalyses the reaction Ni-sirohydrochlorin + 2 L-glutamine + 2 ATP + 2 H2O = Ni-sirohydrochlorin a,c-diamide + 2 L-glutamate + 2 ADP + 2 phosphate + 2 H(+). It participates in cofactor biosynthesis; adenosylcobalamin biosynthesis; cob(II)yrinate a,c-diamide from sirohydrochlorin (anaerobic route): step 10/10. Functionally, catalyzes the ATP-dependent amidation of the two carboxylate groups at positions a and c of cobyrinate, using either L-glutamine or ammonia as the nitrogen source. Involved in the biosynthesis of the unique nickel-containing tetrapyrrole coenzyme F430, the prosthetic group of methyl-coenzyme M reductase (MCR), which plays a key role in methanogenesis and anaerobic methane oxidation. Catalyzes the ATP-dependent amidation of the two carboxylate groups at positions a and c of Ni-sirohydrochlorin, using L-glutamine or ammonia as the nitrogen source. The sequence is that of Cobyrinate a,c-diamide synthase from Methanobrevibacter smithii (strain ATCC 35061 / DSM 861 / OCM 144 / PS).